Here is a 343-residue protein sequence, read N- to C-terminus: F-box/kelch-repeat protein At3g08810 (343 aa).

Over residues 1–15 the composition is skewed to basic residues; sequence MSYPERKRKRSRWSK. Positions 1 to 25 are disordered; that stretch reads MSYPERKRKRSRWSKPHSTQNPSPS. The F-box domain maps to 20–66; the sequence is QNPSPSLPDDVLLSIFARVSRLYYPTLSHVSESFRSLLASPELYKAR. Kelch repeat units lie at residues 134 to 181, 183 to 224, and 225 to 271; these read DIYN…VRDG, QGGH…LPDS, and YCVI…VILA.

The polypeptide is F-box/kelch-repeat protein At3g08810 (Arabidopsis thaliana (Mouse-ear cress)).